A 315-amino-acid polypeptide reads, in one-letter code: Protoheme IX farnesyltransferase (315 aa).

The next 9 helical transmembrane spans lie at 21 to 41, 52 to 74, 98 to 118, 121 to 141, 150 to 170, 177 to 197, 223 to 243, 246 to 266, and 284 to 304; these read YFAL…LVGL, VGFC…NMWW, GEAL…LALA, LLAA…YSMW, IVIG…AATG, VLMF…LALF, ILVY…TPVA, LYLA…WDIW, and FFKF…AEAI.

The protein belongs to the UbiA prenyltransferase family. Protoheme IX farnesyltransferase subfamily. As to quaternary structure, interacts with CtaA.

The protein resides in the cell inner membrane. The catalysed reaction is heme b + (2E,6E)-farnesyl diphosphate + H2O = Fe(II)-heme o + diphosphate. It participates in porphyrin-containing compound metabolism; heme O biosynthesis; heme O from protoheme: step 1/1. In terms of biological role, converts heme B (protoheme IX) to heme O by substitution of the vinyl group on carbon 2 of heme B porphyrin ring with a hydroxyethyl farnesyl side group. The sequence is that of Protoheme IX farnesyltransferase from Dinoroseobacter shibae (strain DSM 16493 / NCIMB 14021 / DFL 12).